We begin with the raw amino-acid sequence, 117 residues long: Protein YchN (117 aa).

The protein to M.jannaschii MJ0989. In terms of assembly, homohexamer. The hexamer is formed by a dimer of trimers.

The sequence is that of Protein YchN (ychN) from Escherichia coli O157:H7.